A 1350-amino-acid polypeptide reads, in one-letter code: Probable serine/threonine-protein kinase DDB_G0278845 (1350 aa).

8 disordered regions span residues 66 to 109, 121 to 159, 179 to 249, 270 to 296, 337 to 396, 431 to 506, 525 to 596, and 612 to 701; these read RELN…NNIR, ENGLLESPTSPIRTSSTPTTPTSPPFITSPPFITSPKGL, LANN…LNSI, SSINGNTTTTTTNTYSYNDNDNVNEYS, NNYN…RDDL, GSTI…EKKK, NDSN…IPTP, and NNNS…NTNE. Residues 84-98 show a composition bias toward polar residues; sequence KYLTSSHSSVVIPQD. Composition is skewed to low complexity over residues 127 to 140 and 181 to 210; these read SPTSPIRTSSTPTT and NNNNNNNNSNNSNNNSNSSNSNISCSNNSN. The span at 211–222 shows a compositional bias: polar residues; sequence KISRLINNSNTT. Residues 223-235 show a composition bias toward low complexity; it reads DSNASIRSSNNNN. The segment covering 236–246 has biased composition (acidic residues); it reads DDFDNNDDEDL. Composition is skewed to low complexity over residues 270-293 and 337-391; these read SSINGNTTTTTTNTYSYNDNDNVN and NNYN…GYNN. Over residues 431-443 the composition is skewed to polar residues; it reads GSTIFTSTSSDIA. A compositionally biased stretch (acidic residues) spans 454–482; sequence NENENENENENENENENDNDSDSENENEN. Low complexity-rich tracts occupy residues 483 to 495 and 525 to 551; these read DNSIGNKSNKSNS and NDSNNNNNNNNSGNNNSFISNGSPFSP. The span at 565 to 592 shows a compositional bias: polar residues; the sequence is PKPTLQRQRSNSKNVLYSPNASPSNSCK. Low complexity-rich tracts occupy residues 612–637, 645–679, and 690–701; these read NNNSNNIENQNNNNNNIDNNIDNNID, NNNNNNNNNNNNNNNNNNNNNNNNNNNNNNNNNNN, and KKTPNNKINTNE. In terms of domain architecture, Protein kinase spans 756 to 1082; that stretch reads FTLIEKIGEG…VENIKNHIFF (327 aa). Residues 762-770 and lysine 785 each bind ATP; that span reads IGEGGFGQV. Residue aspartate 880 is the Proton acceptor of the active site. An AGC-kinase C-terminal domain is found at 1083–1203; it reads NGVPWGKLHD…PRADDQPLLW (121 aa). Disordered stretches follow at residues 1129–1159, 1190–1219, 1232–1285, and 1300–1350; these read SLLPPPLPPPPQTPTQPQQPSLPPQTPNDKM, GFTYPRADDQPLLWNNNNNNNNNNNNNNNN, NNNN…NKTV, and NCNN…KQQQ. Pro residues predominate over residues 1131–1142; that stretch reads LPPPLPPPPQTP. Composition is skewed to low complexity over residues 1204–1219, 1232–1283, and 1300–1313; these read NNNNNNNNNNNNNNNN, NNNN…SNNK, and NCNNNNNNDENNIN. 2 stretches are compositionally biased toward polar residues: residues 1314-1330 and 1338-1350; these read TGNLTPPNSSPFNSGEN and PTSPYGSYSKQQQ.

The protein belongs to the protein kinase superfamily. AGC Ser/Thr protein kinase family.

The enzyme catalyses L-seryl-[protein] + ATP = O-phospho-L-seryl-[protein] + ADP + H(+). The catalysed reaction is L-threonyl-[protein] + ATP = O-phospho-L-threonyl-[protein] + ADP + H(+). This Dictyostelium discoideum (Social amoeba) protein is Probable serine/threonine-protein kinase DDB_G0278845.